The following is a 688-amino-acid chain: Two-component response regulator ORR23 (688 aa).

One can recognise a Response regulatory domain in the interval 25–140; that stretch reads RVLAVDDDPV…ELRNIWQHVI (116 aa). At aspartate 76 the chain carries 4-aspartylphosphate. The interval 161–212 is disordered; it reads PPNADSDHVHGHVTCGSPDQSGRPSKKRKEYCSEEEDEGEVNTQDIDDPSAP. The span at 193–208 shows a compositional bias: acidic residues; the sequence is SEEEDEGEVNTQDIDD. The myb-like GARP DNA-binding region spans 211–270; the sequence is APKKPRVVWSVELHRKFVAAVNQLGIDKAVPKRILELMNVEKLTRENVASHLQKYRLYLK.

The protein belongs to the ARR family. Type-B subfamily. In terms of processing, two-component system major event consists of a His-to-Asp phosphorelay between a sensor histidine kinase (HK) and a response regulator (RR). In plants, the His-to-Asp phosphorelay involves an additional intermediate named Histidine-containing phosphotransfer protein (HPt). This multistep phosphorelay consists of a His-Asp-His-Asp sequential transfer of a phosphate group between first a His and an Asp of the HK protein, followed by the transfer to a conserved His of the HPt protein and finally the transfer to an Asp in the receiver domain of the RR protein.

The protein localises to the nucleus. Its function is as follows. Transcriptional activator that binds specific DNA sequence. Functions as a response regulator involved in His-to-Asp phosphorelay signal transduction system. Phosphorylation of the Asp residue in the receiver domain activates the ability of the protein to promote the transcription of target genes. May directly activate some type-A response regulators in response to cytokinins. The polypeptide is Two-component response regulator ORR23 (Oryza sativa subsp. indica (Rice)).